Here is a 295-residue protein sequence, read N- to C-terminus: Porphobilinogen deaminase (295 aa).

S-(dipyrrolylmethanemethyl)cysteine is present on Cys-241.

The protein belongs to the HMBS family. Monomer. It depends on dipyrromethane as a cofactor.

The catalysed reaction is 4 porphobilinogen + H2O = hydroxymethylbilane + 4 NH4(+). It participates in porphyrin-containing compound metabolism; protoporphyrin-IX biosynthesis; coproporphyrinogen-III from 5-aminolevulinate: step 2/4. Functionally, tetrapolymerization of the monopyrrole PBG into the hydroxymethylbilane pre-uroporphyrinogen in several discrete steps. The chain is Porphobilinogen deaminase from Lachnospira eligens (strain ATCC 27750 / DSM 3376 / VPI C15-48 / C15-B4) (Eubacterium eligens).